The chain runs to 332 residues: rRNA biogenesis protein rrp-36 (332 aa).

Disordered regions lie at residues 1–91 (MPAV…ASQL), 104–196 (GALK…SGKS), 243–262 (SMES…ELLS), and 312–332 (KKIA…AEDR). Acidic residues-rich tracts occupy residues 27 to 45 (EPDS…EEEG), 53 to 77 (DTEE…DSDA), and 117 to 127 (EDGSDDDEEKE). Composition is skewed to basic and acidic residues over residues 128 to 142 (EPNW…MKAK) and 165 to 183 (RRRD…RDPR). The stretch at 212-274 (DYQEDEMKQL…KKKEKELIKQ (63 aa)) forms a coiled coil. The span at 315–332 (AGKEKKALPLARRTAEDR) shows a compositional bias: basic and acidic residues.

This sequence belongs to the RRP36 family. In terms of assembly, associates with 90S and pre-40S pre-ribosomal particles.

The protein localises to the nucleus. The protein resides in the nucleolus. Component of the 90S pre-ribosome involved in the maturation of rRNAs. Required for early cleavages of the pre-RNAs in the 40S ribosomal subunit maturation pathway. This is rRNA biogenesis protein rrp-36 (rrp-36) from Neurospora crassa (strain ATCC 24698 / 74-OR23-1A / CBS 708.71 / DSM 1257 / FGSC 987).